The chain runs to 106 residues: uncharacterized protein (106 aa).

Helical transmembrane passes span 43-63 (CSTI…LAIV) and 86-106 (IPEL…FSLF).

The protein localises to the membrane. This is an uncharacterized protein from Saccharomyces cerevisiae (strain ATCC 204508 / S288c) (Baker's yeast).